Consider the following 93-residue polypeptide: Pyrimidine/purine nucleoside phosphorylase (93 aa).

This sequence belongs to the nucleoside phosphorylase PpnP family.

It carries out the reaction a purine D-ribonucleoside + phosphate = a purine nucleobase + alpha-D-ribose 1-phosphate. The catalysed reaction is adenosine + phosphate = alpha-D-ribose 1-phosphate + adenine. It catalyses the reaction cytidine + phosphate = cytosine + alpha-D-ribose 1-phosphate. The enzyme catalyses guanosine + phosphate = alpha-D-ribose 1-phosphate + guanine. It carries out the reaction inosine + phosphate = alpha-D-ribose 1-phosphate + hypoxanthine. The catalysed reaction is thymidine + phosphate = 2-deoxy-alpha-D-ribose 1-phosphate + thymine. It catalyses the reaction uridine + phosphate = alpha-D-ribose 1-phosphate + uracil. The enzyme catalyses xanthosine + phosphate = alpha-D-ribose 1-phosphate + xanthine. Functionally, catalyzes the phosphorolysis of diverse nucleosides, yielding D-ribose 1-phosphate and the respective free bases. Can use uridine, adenosine, guanosine, cytidine, thymidine, inosine and xanthosine as substrates. Also catalyzes the reverse reactions. This Shewanella halifaxensis (strain HAW-EB4) protein is Pyrimidine/purine nucleoside phosphorylase.